The primary structure comprises 225 residues: NAD(P)H-quinone oxidoreductase subunit K, chloroplastic (225 aa).

The [4Fe-4S] cluster site is built by Cys-43, Cys-44, Cys-108, and Cys-139.

It belongs to the complex I 20 kDa subunit family. NDH is composed of at least 16 different subunits, 5 of which are encoded in the nucleus. The cofactor is [4Fe-4S] cluster.

It localises to the plastid. The protein resides in the chloroplast thylakoid membrane. It catalyses the reaction a plastoquinone + NADH + (n+1) H(+)(in) = a plastoquinol + NAD(+) + n H(+)(out). The enzyme catalyses a plastoquinone + NADPH + (n+1) H(+)(in) = a plastoquinol + NADP(+) + n H(+)(out). Its function is as follows. NDH shuttles electrons from NAD(P)H:plastoquinone, via FMN and iron-sulfur (Fe-S) centers, to quinones in the photosynthetic chain and possibly in a chloroplast respiratory chain. The immediate electron acceptor for the enzyme in this species is believed to be plastoquinone. Couples the redox reaction to proton translocation, and thus conserves the redox energy in a proton gradient. The polypeptide is NAD(P)H-quinone oxidoreductase subunit K, chloroplastic (Lactuca sativa (Garden lettuce)).